Here is a 142-residue protein sequence, read N- to C-terminus: Hdr-like menaquinol oxidoreductase cytochrome c subunit (142 aa).

The Cytoplasmic portion of the chain corresponds to 1-6 (MYNKKY). Residues 7-27 (VIPLILVFLIGFFTPYWYNAM) form a helical membrane-spanning segment. The Extracellular segment spans residues 28–142 (AGTLGHVPTL…GIEELSKYFS (115 aa)). The heme site is built by cysteine 93, cysteine 96, histidine 97, cysteine 104, cysteine 107, histidine 108, cysteine 117, cysteine 120, and histidine 121.

As to quaternary structure, consists of five subunits: an integral membrane subunit, a cytochrome b-like subunit, a cytochrome c subunit and two iron-sulfur subunits. Post-translationally, binds 3 heme groups per subunit.

It is found in the cell membrane. In terms of biological role, has menaquinol-oxidizing activity. HmeA, HmeB and HmeE subunits may together catalyze electron transfer from menaquinol to cytochrome c. The polypeptide is Hdr-like menaquinol oxidoreductase cytochrome c subunit (hmeE) (Archaeoglobus fulgidus (strain ATCC 49558 / DSM 4304 / JCM 9628 / NBRC 100126 / VC-16)).